Here is a 226-residue protein sequence, read N- to C-terminus: Thioredoxin domain-containing protein 9 (226 aa).

A Thioredoxin domain is found at 75–180 (EIGSERDFFQ…TTETLEWRLG (106 aa)). Phosphoserine occurs at positions 188, 221, and 223.

As to quaternary structure, forms ternary complexes with the chaperonin TCP1 complex, spanning the cylindrical chaperonin cavity and contacting at least 2 subunits.

Its subcellular location is the cytoplasm. The protein localises to the nucleus. It localises to the cytoskeleton. The protein resides in the microtubule organizing center. It is found in the centrosome. Its subcellular location is the midbody. In terms of biological role, significantly diminishes the chaperonin TCP1 complex ATPase activity, thus negatively impacts protein folding, including that of actin or tubulin. This Rattus norvegicus (Rat) protein is Thioredoxin domain-containing protein 9 (Txndc9).